Here is a 219-residue protein sequence, read N- to C-terminus: Orotidine 5'-phosphate decarboxylase (219 aa).

Substrate is bound by residues Asp10, Lys32, 58–67, Ser113, 163–173, Gly186, and Arg187; these read DFKVADIPYT and PGIGAQGGDPY. Lys60 serves as the catalytic Proton donor.

This sequence belongs to the OMP decarboxylase family. Type 1 subfamily. As to quaternary structure, homodimer.

The catalysed reaction is orotidine 5'-phosphate + H(+) = UMP + CO2. The protein operates within pyrimidine metabolism; UMP biosynthesis via de novo pathway; UMP from orotate: step 2/2. Functionally, catalyzes the decarboxylation of orotidine 5'-monophosphate (OMP) to uridine 5'-monophosphate (UMP). The polypeptide is Orotidine 5'-phosphate decarboxylase (Thermoplasma volcanium (strain ATCC 51530 / DSM 4299 / JCM 9571 / NBRC 15438 / GSS1)).